The primary structure comprises 312 residues: Olfactory receptor 2M7 (312 aa).

Residues 1 to 25 (MAWENQTFNSDFLLLGIFNHSPTHT) are Extracellular-facing. N-linked (GlcNAc...) asparagine glycosylation is present at N5. The helical transmembrane segment at 26–49 (FLFFLVLAIFSVAFMGNSIMVLLI) threads the bilayer. Topologically, residues 50 to 57 (YLDTQLHT) are cytoplasmic. Residues 58–79 (PMYFLLSQLSLMDLMLICTTVP) traverse the membrane as a helical segment. Residues 80–100 (KMAFNYLSGSKSISMAGCATQ) lie on the Extracellular side of the membrane. The cysteines at positions 97 and 189 are disulfide-linked. A helical membrane pass occupies residues 101-120 (IFFYISLLGSECFLLAVMSY). Topologically, residues 121-139 (DRYTAICHPLRYTNLMRPK) are cytoplasmic. The chain crosses the membrane as a helical span at residues 140–158 (ICGLMTAFSWILGSTDGII). Residues 159 to 195 (DAVATFSFSYCGSREIAHFCCDFPSLLILSCNDTSIF) lie on the Extracellular side of the membrane. The helical transmembrane segment at 196–219 (EEVIFICCIVMLVFPVAIIITSYA) threads the bilayer. Over 220 to 236 (RVILAVIHMGSGEGRRK) the chain is Cytoplasmic. The helical transmembrane segment at 237-259 (AFTTCSSHLMVVGMYYGAGLFMC) threads the bilayer. At 260-272 (IQPTSHHSPMQDK) the chain is on the extracellular side. The chain crosses the membrane as a helical span at residues 273–292 (MVSVFYTIVTPMLNPLIYSL). The Cytoplasmic portion of the chain corresponds to 293-311 (RNKEVTRALMKILGKGKSG).

Belongs to the G-protein coupled receptor 1 family.

Its subcellular location is the cell membrane. Functionally, odorant receptor. In Homo sapiens (Human), this protein is Olfactory receptor 2M7 (OR2M7).